Reading from the N-terminus, the 181-residue chain is Adenine phosphoribosyltransferase (181 aa).

The protein belongs to the purine/pyrimidine phosphoribosyltransferase family. As to quaternary structure, homodimer.

It is found in the cytoplasm. The catalysed reaction is AMP + diphosphate = 5-phospho-alpha-D-ribose 1-diphosphate + adenine. Its pathway is purine metabolism; AMP biosynthesis via salvage pathway; AMP from adenine: step 1/1. Catalyzes a salvage reaction resulting in the formation of AMP, that is energically less costly than de novo synthesis. In Shewanella amazonensis (strain ATCC BAA-1098 / SB2B), this protein is Adenine phosphoribosyltransferase.